A 172-amino-acid chain; its full sequence is Hemagglutinin/amebocyte aggregation factor (172 aa).

A signal peptide spans 1 to 19 (MNSPAIVIIIFSTLTFSEA). Repeat copies occupy residues 21-25 (VNDWD), 50-54 (EDRRW), 73-77 (VNDWD), and 102-106 (EDRRW). Intrachain disulfides connect Cys32–Cys58, Cys67–Cys172, Cys84–Cys110, Cys111–Cys117, and Cys123–Cys167. 2 repeat units span residues 129-133 (VNSWD) and 158-162 (EDRRW).

This sequence belongs to the dermatopontin family.

It localises to the secreted. Its function is as follows. Possesses the property of inducing both aggregation of amebocytes and agglutination of erythrocytes. The sequence is that of Hemagglutinin/amebocyte aggregation factor from Limulus polyphemus (Atlantic horseshoe crab).